An 87-amino-acid chain; its full sequence is UPF0250 protein NT01EI_2946 (87 aa).

It belongs to the UPF0250 family.

The polypeptide is UPF0250 protein NT01EI_2946 (Edwardsiella ictaluri (strain 93-146)).